Reading from the N-terminus, the 312-residue chain is Photosystem I assembly protein Ycf4 (312 aa).

The next 3 membrane-spanning stretches (helical) occupy residues 42–62 (WAFI…SSYF), 91–111 (IILF…GLFL), and 113–133 (FYLW…IYIY).

This sequence belongs to the Ycf4 family.

The protein resides in the plastid. Its subcellular location is the chloroplast thylakoid membrane. In terms of biological role, seems to be required for the assembly of the photosystem I complex. This chain is Photosystem I assembly protein Ycf4, found in Pleurastrum terricola (Filamentous green alga).